The chain runs to 149 residues: L-alanine exporter AlaE (149 aa).

The next 4 membrane-spanning stretches (helical) occupy residues 16–36, 46–66, 85–105, and 112–132; these read FAMV…LSGM, LVAI…RDLF, ILAY…VVGA, and AAVS…GYFL.

This sequence belongs to the AlaE exporter family.

It localises to the cell inner membrane. Functionally, exports L-alanine. This is L-alanine exporter AlaE from Shigella flexneri.